The chain runs to 306 residues: Pyridoxal 5'-phosphate synthase subunit PdxS (306 aa).

D36 contacts D-ribose 5-phosphate. The active-site Schiff-base intermediate with D-ribose 5-phosphate is K93. G165 contributes to the D-ribose 5-phosphate binding site. R177 provides a ligand contact to D-glyceraldehyde 3-phosphate. D-ribose 5-phosphate contacts are provided by residues G226 and 247–248 (GS).

The protein belongs to the PdxS/SNZ family. In the presence of PdxT, forms a dodecamer of heterodimers.

It catalyses the reaction aldehydo-D-ribose 5-phosphate + D-glyceraldehyde 3-phosphate + L-glutamine = pyridoxal 5'-phosphate + L-glutamate + phosphate + 3 H2O + H(+). Its pathway is cofactor biosynthesis; pyridoxal 5'-phosphate biosynthesis. Catalyzes the formation of pyridoxal 5'-phosphate from ribose 5-phosphate (RBP), glyceraldehyde 3-phosphate (G3P) and ammonia. The ammonia is provided by the PdxT subunit. Can also use ribulose 5-phosphate and dihydroxyacetone phosphate as substrates, resulting from enzyme-catalyzed isomerization of RBP and G3P, respectively. This chain is Pyridoxal 5'-phosphate synthase subunit PdxS, found in Salinispora tropica (strain ATCC BAA-916 / DSM 44818 / JCM 13857 / NBRC 105044 / CNB-440).